The primary structure comprises 59 residues: Large ribosomal subunit protein eL37 (59 aa).

Zn(2+)-binding residues include Cys20, Cys23, Cys35, and Cys38. The C4-type zinc-finger motif lies at 20 to 38; it reads CRRCGRHSFHRRKGYCAAC.

This sequence belongs to the eukaryotic ribosomal protein eL37 family. Zn(2+) serves as cofactor.

Functionally, binds to the 23S rRNA. The protein is Large ribosomal subunit protein eL37 (rpl37e) of Archaeoglobus fulgidus (strain ATCC 49558 / DSM 4304 / JCM 9628 / NBRC 100126 / VC-16).